A 426-amino-acid polypeptide reads, in one-letter code: PHD finger-containing protein 6 (426 aa).

Residues Arg9–Arg59 form a PHD-type zinc finger. 8 residues coordinate Zn(2+): Cys12, Cys15, Cys27, Cys30, His36, Cys39, Cys53, and Cys56. 2 disordered regions span residues Thr122–Phe144 and Arg185–Ala205.

As to quaternary structure, interacts directly with AIPP3/BDT1.

Together with AIPP3/BDT1, cooperates to form a BAH-PHD bivalent histone reader complex able to read histone H3 lysine 27 trimethylation (H3K27me3) histone marks in order to regulate transcription, especially to prevent early flowering; promotes AIPP3/BDT1 binding to H3K27me3. This chain is PHD finger-containing protein 6, found in Arabidopsis thaliana (Mouse-ear cress).